A 462-amino-acid chain; its full sequence is Cytokine-like nuclear factor N-PAC (462 aa).

Residues 8 to 66 (IGDLVWGKLGRYPPWPGKVVSPPKDLKKPRGKKCFFVKFFGTEDHAWIKVEQLKPYHPH) form the PWWP domain. The span at 91 to 111 (KKAKGKDQSHSDDKSKSDKGR) shows a compositional bias: basic and acidic residues. Residues 91 to 139 (KKAKGKDQSHSDDKSKSDKGRKAAKPMKIIEEDDEDAFKGGSSDKPASS) form a disordered region. The segment at 169 to 462 (GSITPTDKRI…MSAVYRAYIH (294 aa)) is dehydrogenase domain. NAD(+) contacts are provided by residues 179–193 (GFLG…VVSN), Thr-270, and Lys-414.

This sequence belongs to the HIBADH-related family. NP60 subfamily. As to quaternary structure, homotetramere. Binds to mononucleosomes.

The protein resides in the nucleus. Its subcellular location is the chromosome. May have oxidoreductase activity. Regulates p38 MAP kinase activity by mediating stress activation of mapk14 and specifically regulating mapk14 signaling. Its function is as follows. Cytokine-like nuclear factor with chromatin gene reader activity involved in chromatin modification and regulation of gene expression. Acts as a nucleosome-destabilizing factor that is recruited to genes during transcriptional activation. Recognizes and binds histone H3 without a preference for specific epigenetic markers and also binds DNA. Interacts with KDM1B and promotes its histone demethylase activity by facilitating the capture of H3 tails, they form a multifunctional enzyme complex that modifies transcribed chromatin and facilitates Pol II transcription through nucleosomes. This is Cytokine-like nuclear factor N-PAC (glyr1) from Danio rerio (Zebrafish).